The chain runs to 850 residues: Trimethylamine-N-oxide reductase (850 aa).

The segment at residues 1 to 39 (MKNKDSLHVSRRRFLAQLGGLTVAGMLGPSLLTPRSARA) is a signal peptide (tat-type signal). Residue Ser-191 coordinates Mo-bis(molybdopterin guanine dinucleotide).

This sequence belongs to the prokaryotic molybdopterin-containing oxidoreductase family. Mo-bis(molybdopterin guanine dinucleotide) serves as cofactor. Predicted to be exported by the Tat system. The position of the signal peptide cleavage has not been experimentally proven.

The protein resides in the periplasm. The catalysed reaction is trimethylamine + 2 Fe(III)-[cytochrome c] + H2O = trimethylamine N-oxide + 2 Fe(II)-[cytochrome c] + 3 H(+). Its function is as follows. Reduces trimethylamine-N-oxide (TMAO) into trimethylamine; an anaerobic reaction coupled to energy-yielding reactions. The polypeptide is Trimethylamine-N-oxide reductase (torA) (Salmonella typhi).